The sequence spans 286 residues: Protease HtpX homolog (286 aa).

A run of 2 helical transmembrane segments spans residues 7 to 27 (TFML…MIGG) and 29 to 49 (SGMM…YWFS). His-131 contributes to the Zn(2+) binding site. Glu-132 is an active-site residue. His-135 contributes to the Zn(2+) binding site. 2 helical membrane-spanning segments follow: residues 146 to 166 (ISAT…FFGG) and 177 to 197 (IAGI…QMAI). Residue Glu-202 coordinates Zn(2+).

Belongs to the peptidase M48B family. It depends on Zn(2+) as a cofactor.

The protein localises to the cell inner membrane. The protein is Protease HtpX homolog of Ralstonia pickettii (strain 12J).